The chain runs to 861 residues: DNA mismatch repair protein MutS (861 aa).

613-620 contributes to the ATP binding site; that stretch reads GPNMGGKS.

This sequence belongs to the DNA mismatch repair MutS family.

Functionally, this protein is involved in the repair of mismatches in DNA. It is possible that it carries out the mismatch recognition step. This protein has a weak ATPase activity. The polypeptide is DNA mismatch repair protein MutS (Dichelobacter nodosus (strain VCS1703A)).